The sequence spans 430 residues: Adenylosuccinate synthetase (430 aa).

GTP-binding positions include 12–18 (GDEGKGK) and 40–42 (GHT). The active-site Proton acceptor is Asp-13. 2 residues coordinate Mg(2+): Asp-13 and Gly-40. Residues 13–16 (DEGK), 38–41 (NAGH), Thr-130, Arg-144, Gln-224, Thr-239, and Arg-303 each bind IMP. The active-site Proton donor is the His-41. A substrate-binding site is contributed by 299 to 305 (VNTGRKR). Residues Arg-305, 331–333 (KLD), and 413–415 (STS) contribute to the GTP site.

This sequence belongs to the adenylosuccinate synthetase family. Homodimer. Mg(2+) is required as a cofactor.

The protein resides in the cytoplasm. The enzyme catalyses IMP + L-aspartate + GTP = N(6)-(1,2-dicarboxyethyl)-AMP + GDP + phosphate + 2 H(+). It participates in purine metabolism; AMP biosynthesis via de novo pathway; AMP from IMP: step 1/2. Functionally, plays an important role in the de novo pathway of purine nucleotide biosynthesis. Catalyzes the first committed step in the biosynthesis of AMP from IMP. This is Adenylosuccinate synthetase from Nitrobacter hamburgensis (strain DSM 10229 / NCIMB 13809 / X14).